A 336-amino-acid chain; its full sequence is ATP-dependent 6-phosphofructokinase 3 (336 aa).

Residues glycine 10, 72-73, and 108-111 each bind ATP; these read RE and GNGT. Asparagine 109 is a Mg(2+) binding site. Substrate contacts are provided by residues 131 to 133, arginine 168, 175 to 177, glutamate 228, arginine 255, and 261 to 264; these read TID, MGH, and YIQR. Aspartate 133 functions as the Proton acceptor in the catalytic mechanism.

This sequence belongs to the phosphofructokinase type A (PFKA) family. Mixed-substrate PFK group III subfamily. In terms of assembly, homodimer or homotetramer. Requires Mg(2+) as cofactor.

Its subcellular location is the cytoplasm. It carries out the reaction beta-D-fructose 6-phosphate + ATP = beta-D-fructose 1,6-bisphosphate + ADP + H(+). Its pathway is carbohydrate degradation; glycolysis; D-glyceraldehyde 3-phosphate and glycerone phosphate from D-glucose: step 3/4. In terms of biological role, catalyzes the phosphorylation of D-fructose 6-phosphate to fructose 1,6-bisphosphate by ATP, the first committing step of glycolysis. This Bacteroides thetaiotaomicron (strain ATCC 29148 / DSM 2079 / JCM 5827 / CCUG 10774 / NCTC 10582 / VPI-5482 / E50) protein is ATP-dependent 6-phosphofructokinase 3.